The chain runs to 300 residues: NAD kinase (300 aa).

D75 acts as the Proton acceptor in catalysis. NAD(+) contacts are provided by residues 75-76 (DG), 149-150 (ND), R177, D179, 190-195 (TAYALS), A214, and Q248.

This sequence belongs to the NAD kinase family. The cofactor is a divalent metal cation.

The protein resides in the cytoplasm. It carries out the reaction NAD(+) + ATP = ADP + NADP(+) + H(+). In terms of biological role, involved in the regulation of the intracellular balance of NAD and NADP, and is a key enzyme in the biosynthesis of NADP. Catalyzes specifically the phosphorylation on 2'-hydroxyl of the adenosine moiety of NAD to yield NADP. This chain is NAD kinase, found in Paraburkholderia phytofirmans (strain DSM 17436 / LMG 22146 / PsJN) (Burkholderia phytofirmans).